The primary structure comprises 296 residues: MSWINRIFSKSPSSSTRKANVPEGVWTKCTACEQVLYSEELKRNLYVCPKCGHHMRIDARERLLNLLDEDSSQEIAADLEPKDILKFKDLKKYKDRINAAQKETGEKDALITMTGTLYNMPIVVAASNFAFMGGSMGSVVGAKFVKAAEKAMEMNCPFVCFSASGGARMQEALFSLMQMAKTSAVLAQMREKGVPFISVLTDPTLGGVSASFAMLGDLNIAEPKALIGFAGPRVIEQTVREKLPEGFQRSEFLLEKGAIDMIVKRSEMRQTLASVLSKLTNQPSPFVEPELISEDE.

One can recognise a CoA carboxyltransferase N-terminal domain in the interval 25–294 (VWTKCTACEQ…PFVEPELISE (270 aa)). Zn(2+) contacts are provided by Cys-29, Cys-32, Cys-48, and Cys-51. The segment at 29 to 51 (CTACEQVLYSEELKRNLYVCPKC) adopts a C4-type zinc-finger fold.

This sequence belongs to the AccD/PCCB family. Acetyl-CoA carboxylase is a heterohexamer composed of biotin carboxyl carrier protein (AccB), biotin carboxylase (AccC) and two subunits each of ACCase subunit alpha (AccA) and ACCase subunit beta (AccD). It depends on Zn(2+) as a cofactor.

It is found in the cytoplasm. It catalyses the reaction N(6)-carboxybiotinyl-L-lysyl-[protein] + acetyl-CoA = N(6)-biotinyl-L-lysyl-[protein] + malonyl-CoA. It participates in lipid metabolism; malonyl-CoA biosynthesis; malonyl-CoA from acetyl-CoA: step 1/1. Functionally, component of the acetyl coenzyme A carboxylase (ACC) complex. Biotin carboxylase (BC) catalyzes the carboxylation of biotin on its carrier protein (BCCP) and then the CO(2) group is transferred by the transcarboxylase to acetyl-CoA to form malonyl-CoA. This chain is Acetyl-coenzyme A carboxylase carboxyl transferase subunit beta, found in Haemophilus influenzae (strain 86-028NP).